The chain runs to 437 residues: Enolase 1 (437 aa).

Gln164 serves as a coordination point for (2R)-2-phosphoglycerate. The Proton donor role is filled by Glu206. Residues Asp244, Glu289, and Asp316 each coordinate Mg(2+). (2R)-2-phosphoglycerate is bound by residues Lys341, Arg370, Ser371, and Lys392. Lys341 functions as the Proton acceptor in the catalytic mechanism.

This sequence belongs to the enolase family. The cofactor is Mg(2+).

It is found in the cytoplasm. Its subcellular location is the secreted. It localises to the cell surface. It carries out the reaction (2R)-2-phosphoglycerate = phosphoenolpyruvate + H2O. It functions in the pathway carbohydrate degradation; glycolysis; pyruvate from D-glyceraldehyde 3-phosphate: step 4/5. In terms of biological role, catalyzes the reversible conversion of 2-phosphoglycerate (2-PG) into phosphoenolpyruvate (PEP). It is essential for the degradation of carbohydrates via glycolysis. The protein is Enolase 1 of Desulfitobacterium hafniense (strain Y51).